The chain runs to 387 residues: MGFARLLHLVFSLLVFAGITNGLICPFDSIYQLGDSFSDTGNLIRLPPDGPTFTAAHFPYGETFPGTPTGRCSDGRLIIDFIATALNLPLLNPYLQQNVSFRHGVNFAVAGATALDRSFLAARGVQVSDIHSHLSAQLNWFRTYLGSICSTPKECSNKLKNALFILGNIGNNDVNYAFPNRTIEEIRAYVPFITEAVANATREIIRLGGSRVIVPGIFPIGCVARNLNFLNFFPDGDKDDLGCLSSLNNLSIYFNSLFQRALASLSIEFPQAVIIYADYYNAWRFLFRNGPALGSNSTSLLKCCCGIGGPYNYDPDRECGSRGVPVCPNPTQYIQWDGTHFTQAAYRRVAEYVIPGIIKALKCSYSNIQPFLREGEGRQALRLNERE.

The first 22 residues, 1–22 (MGFARLLHLVFSLLVFAGITNG), serve as a signal peptide directing secretion. Residue Ser36 is the Nucleophile of the active site. N-linked (GlcNAc...) asparagine glycosylation is found at Asn98, Asn180, Asn199, Asn249, and Asn296. Residues Asp337 and His340 contribute to the active site.

The protein belongs to the 'GDSL' lipolytic enzyme family.

The enzyme catalyses 17-O-acetylajmaline + H2O = ajmaline + acetate + H(+). It catalyses the reaction 17-O-acetylnorajmaline + H2O = norajmaline + acetate + H(+). It participates in alkaloid biosynthesis; ajmaline biosynthesis. In terms of biological role, acetylesterase involved in the biosynthesis of ajmaline-type monoterpenoid indole alkaloids (MIAs) natural products, important plant-derived pharmaceuticals used in the therapy of heart disorders. Deacetylates 17-O-acetylajmaline and 17-O-acetylnorajmaline to produce ajmaline and norajmaline, but is inactive toward other acetylated alkaloids. The sequence is that of Acetylajmalan esterase from Rauvolfia serpentina (Serpentine wood).